A 209-amino-acid chain; its full sequence is PRA1 family protein B1 (209 aa).

The residue at position 2 (Ala-2) is an N-acetylalanine. Helical transmembrane passes span 73 to 93 (LAYFKVNYVAIVSLVLAFSLF), 95 to 115 (HPLSLLVLIGLLGGWMFLYLF), 133 to 153 (ETLLALVLSTIVVVFMTSVGS), 154 to 174 (LLTSALMIGVAIVCVHGAFVV), and 185 to 205 (PANAGLLSFLGGSATSAAAAV).

Belongs to the PRA1 family. As to quaternary structure, can form homodimer. Interacts with PRA1B2, PRA1B3, PRA1B4, PRA1B5, PRA1B6 and PRA1E.

It is found in the endosome membrane. Its function is as follows. May be involved in both secretory and endocytic intracellular trafficking in the endosomal/prevacuolar compartments. The polypeptide is PRA1 family protein B1 (PRA1B1) (Arabidopsis thaliana (Mouse-ear cress)).